Here is a 119-residue protein sequence, read N- to C-terminus: Large ribosomal subunit protein bL20 (119 aa).

This sequence belongs to the bacterial ribosomal protein bL20 family.

Binds directly to 23S ribosomal RNA and is necessary for the in vitro assembly process of the 50S ribosomal subunit. It is not involved in the protein synthesizing functions of that subunit. This chain is Large ribosomal subunit protein bL20, found in Albidiferax ferrireducens (strain ATCC BAA-621 / DSM 15236 / T118) (Rhodoferax ferrireducens).